We begin with the raw amino-acid sequence, 274 residues long: Acetyl-coenzyme A carboxylase carboxyl transferase subunit beta (274 aa).

In terms of domain architecture, CoA carboxyltransferase N-terminal spans 18–274 (IWTKCKKCDY…FYNRQCFLKF (257 aa)). Residues C22, C25, C41, and C44 each contribute to the Zn(2+) site. The C4-type zinc finger occupies 22–44 (CKKCDYILLQKDFEENLMVCPKC).

Belongs to the AccD/PCCB family. Acetyl-CoA carboxylase is a heterohexamer composed of biotin carboxyl carrier protein (AccB), biotin carboxylase (AccC) and two subunits each of ACCase subunit alpha (AccA) and ACCase subunit beta (AccD). It depends on Zn(2+) as a cofactor.

Its subcellular location is the cytoplasm. It catalyses the reaction N(6)-carboxybiotinyl-L-lysyl-[protein] + acetyl-CoA = N(6)-biotinyl-L-lysyl-[protein] + malonyl-CoA. The protein operates within lipid metabolism; malonyl-CoA biosynthesis; malonyl-CoA from acetyl-CoA: step 1/1. Functionally, component of the acetyl coenzyme A carboxylase (ACC) complex. Biotin carboxylase (BC) catalyzes the carboxylation of biotin on its carrier protein (BCCP) and then the CO(2) group is transferred by the transcarboxylase to acetyl-CoA to form malonyl-CoA. The chain is Acetyl-coenzyme A carboxylase carboxyl transferase subunit beta from Endomicrobium trichonymphae.